A 276-amino-acid chain; its full sequence is Phospholipid phosphatase 2 (276 aa).

Over 1 to 4 the chain is Cytoplasmic; sequence MERR. A helical transmembrane segment spans residues 5–25; that stretch reads WVFVLLDVLCVLVASLPFIIL. At 26-51 the chain is on the lumenal side; sequence TLVNAPYKRGFYCGDDSIRYPYRPDT. The helical transmembrane segment at 52-72 threads the bilayer; the sequence is ITHGLMAGVIITATVVLVSSG. The Cytoplasmic portion of the chain corresponds to 73–87; it reads EAYLVYTDRLYSRSD. A helical membrane pass occupies residues 88 to 108; that stretch reads FNNYVAAIYKVLGTFLFGAAV. Residues 109–161 are Lumenal-facing; it reads SQSLTDLAKYMIGRLRPSFLAVCDPDWSRVNCSGYVQVEVCRGSPANVTEARL. The interval 117 to 125 is phosphatase sequence motif I; sequence KYMIGRLRP. N-linked (GlcNAc...) asparagine glycans are attached at residues Asn139 and Asn155. A helical transmembrane segment spans residues 162–182; it reads SFYSGHSSFGMYCMLFLALYV. Positions 164–167 are phosphatase sequence motif II; that stretch reads YSGH. His167 serves as the catalytic Proton donors. Over 183 to 189 the chain is Cytoplasmic; it reads QARLCWK. The helical transmembrane segment at 190-210 threads the bilayer; the sequence is WARLLRPTVQFFLVAFAIYVG. Topologically, residues 211–225 are lumenal; sequence YTRVSDNKHHWSDVL. The segment at 212 to 223 is phosphatase sequence motif III; sequence TRVSDNKHHWSD. The active-site Nucleophile is His219. A helical transmembrane segment spans residues 226-246; sequence VGLLQGALVACLTVCYVSDFF. The Cytoplasmic segment spans residues 247–276; that stretch reads KSRPPQSCQENEESERKPSLSLTLTLGDRP. The segment at 252–276 is disordered; it reads QSCQENEESERKPSLSLTLTLGDRP.

This sequence belongs to the PA-phosphatase related phosphoesterase family. In terms of assembly, forms functional homodimers and homooligomers. Can also form heterooligomers with PLPP1 and PLPP3. Post-translationally, N-glycosylated. Expressed in the brain.

It is found in the membrane. It localises to the cell membrane. The protein resides in the early endosome membrane. The protein localises to the endoplasmic reticulum membrane. The enzyme catalyses a 1,2-diacyl-sn-glycero-3-phosphate + H2O = a 1,2-diacyl-sn-glycerol + phosphate. It carries out the reaction 1,2-dihexadecanoyl-sn-glycero-3-phosphate + H2O = 1,2-dihexadecanoyl-sn-glycerol + phosphate. The catalysed reaction is 1,2-di-(9Z-octadecenoyl)-sn-glycero-3-phosphate + H2O = 1,2-di-(9Z-octadecenoyl)-sn-glycerol + phosphate. It catalyses the reaction a monoacyl-sn-glycero-3-phosphate + H2O = a monoacylglycerol + phosphate. The enzyme catalyses (9Z)-octadecenoyl-sn-glycero-3-phosphate + H2O = (9Z-octadecenoyl)-glycerol + phosphate. It carries out the reaction sphing-4-enine 1-phosphate + H2O = sphing-4-enine + phosphate. The catalysed reaction is an N-acylsphing-4-enine 1-phosphate + H2O = an N-acylsphing-4-enine + phosphate. It catalyses the reaction N-(octanoyl)-sphing-4-enine-1-phosphate + H2O = N-octanoylsphing-4-enine + phosphate. The enzyme catalyses N-(9Z-octadecenoyl)-ethanolamine phosphate + H2O = N-(9Z-octadecenoyl) ethanolamine + phosphate. It functions in the pathway lipid metabolism; phospholipid metabolism. Magnesium-independent phospholipid phosphatase. Insensitive to N-ethylmaleimide. Magnesium-independent phospholipid phosphatase that catalyzes the dephosphorylation of a variety of glycerolipid and sphingolipid phosphate esters including phosphatidate/PA, lysophosphatidate/LPA, sphingosine 1-phosphate/S1P and ceramide 1-phosphate/C1P. Has no apparent extracellular phosphatase activity and therefore most probably acts intracellularly. Also acts on N-oleoyl ethanolamine phosphate/N-(9Z-octadecenoyl)-ethanolamine phosphate, a potential physiological compound. Through dephosphorylation of these bioactive lipid mediators produces new bioactive compounds and may regulate signal transduction in different cellular processes. Indirectly regulates, for instance, cell cycle G1/S phase transition through its phospholipid phosphatase activity. This chain is Phospholipid phosphatase 2, found in Rattus norvegicus (Rat).